A 476-amino-acid polypeptide reads, in one-letter code: Glycogen synthase (476 aa).

Residue Lys-15 coordinates ADP-alpha-D-glucose.

This sequence belongs to the glycosyltransferase 1 family. Bacterial/plant glycogen synthase subfamily.

It carries out the reaction [(1-&gt;4)-alpha-D-glucosyl](n) + ADP-alpha-D-glucose = [(1-&gt;4)-alpha-D-glucosyl](n+1) + ADP + H(+). The protein operates within glycan biosynthesis; glycogen biosynthesis. In terms of biological role, synthesizes alpha-1,4-glucan chains using ADP-glucose. This is Glycogen synthase from Streptococcus gordonii (strain Challis / ATCC 35105 / BCRC 15272 / CH1 / DL1 / V288).